A 373-amino-acid polypeptide reads, in one-letter code: MEFKIDGTSQGARACTIKTAHSTILTPVFMPVGTQGTVKALDANDMLELGAKIILGNTYHLYLRPGSKLIKKFGGLHGFSKFPNSFLTDSGGFQAFSLSNNSKPDENGITFKSHIDGSRHYFTPKSVLDTQYDLNSDIMMILDDLVALPNTDERIKTSIQRTTKWAQEAINYHMEQKQKGIGTHQNIFAIIQGGTSKEFRKLSAQQLCDMSDFDGFAIGGLSVGEPNEQMYETVEWTTQFMPKDKPRYLMGVGTPEDLIENIERGVDMFDCVMPTRNARNGTLFTSFGKLNIKKAEFKDDANPIDNECSCYTCKNFSRAYLNHLFRAAEITYFRLASIHNIHYYLNLMKQAREAILADNWSEFKKEFYVKRSK.

Asp-89 acts as the Proton acceptor in catalysis. Substrate is bound by residues 89 to 93 (DSGGF), Asp-143, Gln-192, and Gly-220. Positions 251 to 257 (GVGTPED) are RNA binding. Asp-270 acts as the Nucleophile in catalysis. An RNA binding; important for wobble base 34 recognition region spans residues 275–279 (TRNAR). Zn(2+)-binding residues include Cys-308, Cys-310, Cys-313, and His-339.

It belongs to the queuine tRNA-ribosyltransferase family. In terms of assembly, homodimer. Within each dimer, one monomer is responsible for RNA recognition and catalysis, while the other monomer binds to the replacement base PreQ1. Requires Zn(2+) as cofactor.

The catalysed reaction is 7-aminomethyl-7-carbaguanine + guanosine(34) in tRNA = 7-aminomethyl-7-carbaguanosine(34) in tRNA + guanine. It participates in tRNA modification; tRNA-queuosine biosynthesis. Functionally, catalyzes the base-exchange of a guanine (G) residue with the queuine precursor 7-aminomethyl-7-deazaguanine (PreQ1) at position 34 (anticodon wobble position) in tRNAs with GU(N) anticodons (tRNA-Asp, -Asn, -His and -Tyr). Catalysis occurs through a double-displacement mechanism. The nucleophile active site attacks the C1' of nucleotide 34 to detach the guanine base from the RNA, forming a covalent enzyme-RNA intermediate. The proton acceptor active site deprotonates the incoming PreQ1, allowing a nucleophilic attack on the C1' of the ribose to form the product. After dissociation, two additional enzymatic reactions on the tRNA convert PreQ1 to queuine (Q), resulting in the hypermodified nucleoside queuosine (7-(((4,5-cis-dihydroxy-2-cyclopenten-1-yl)amino)methyl)-7-deazaguanosine). The chain is Queuine tRNA-ribosyltransferase from Aliarcobacter butzleri (strain RM4018) (Arcobacter butzleri).